Consider the following 591-residue polypeptide: Maintenance of mitochondrial morphology protein 1 (591 aa).

The Lumenal portion of the chain corresponds to 1 to 83 (MGFNIPWNGT…AQPSLSFTQG (83 aa)). The helical transmembrane segment at 84 to 104 (LLVGQLSVVLLIGAFIKFFIF) threads the bilayer. At 105–591 (GEAPPPPSRS…GSMPDSVAVT (487 aa)) the chain is on the cytoplasmic side. Disordered regions lie at residues 138–159 (PRTLREKPSTSNILRPVPSSST), 170–189 (YSATPTNPTSKHGRSRVHHS), 334–398 (PGTS…KHAH), and 479–591 (EAEA…VAVT). Polar residues-rich tracts occupy residues 146–159 (STSNILRPVPSSST) and 170–179 (YSATPTNPTS). A compositionally biased stretch (basic residues) spans 180–189 (KHGRSRVHHS). Positions 192 to 462 (QPESLDWFNV…EPRVQVVGLP (271 aa)) constitute an SMP-LTD domain. Residues 336 to 371 (TSDQTMGPSASPPNQSTSTETASINDQTSEGQSTQR) show a composition bias toward polar residues. Residues 379-389 (PTNSTPTAATA) are compositionally biased toward low complexity. Gly residues-rich tracts occupy residues 496–525 (TAGGDGMRGRGGGGGGGGLRGNSSGRGMGY) and 536–550 (GDGGTGVVQGQGAGG). Residues 563–578 (GGDDGEGPGRRSDERF) show a composition bias toward basic and acidic residues.

The protein belongs to the MMM1 family. As to quaternary structure, homodimer. Component of the ER-mitochondria encounter structure (ERMES) or MDM complex, composed of MMM1, MDM10, MDM12 and MDM34. An MMM1 homodimer associates with one molecule of MDM12 on each side in a pairwise head-to-tail manner, and the SMP-LTD domains of MMM1 and MDM12 generate a continuous hydrophobic tunnel for phospholipid trafficking.

The protein resides in the endoplasmic reticulum membrane. Component of the ERMES/MDM complex, which serves as a molecular tether to connect the endoplasmic reticulum (ER) and mitochondria. Components of this complex are involved in the control of mitochondrial shape and protein biogenesis, and function in nonvesicular lipid trafficking between the ER and mitochondria. The MDM12-MMM1 subcomplex functions in the major beta-barrel assembly pathway that is responsible for biogenesis of all outer membrane beta-barrel proteins, and acts in a late step after the SAM complex. The MDM10-MDM12-MMM1 subcomplex further acts in the TOM40-specific pathway after the action of the MDM12-MMM1 complex. Essential for establishing and maintaining the structure of mitochondria and maintenance of mtDNA nucleoids. The protein is Maintenance of mitochondrial morphology protein 1 of Ajellomyces capsulatus (strain G186AR / H82 / ATCC MYA-2454 / RMSCC 2432) (Darling's disease fungus).